We begin with the raw amino-acid sequence, 174 residues long: uncharacterized protein (174 aa).

Transmembrane regions (helical) follow at residues 29-51 and 66-83; these read FAVE…GFWY and VIVI…VTKI.

The protein resides in the cell membrane. This is an uncharacterized protein from Bacillus subtilis (strain 168).